The sequence spans 79 residues: Sulfur carrier protein TusA (79 aa).

The Cysteine persulfide intermediate role is filled by C17.

Belongs to the sulfur carrier protein TusA family.

The protein localises to the cytoplasm. Sulfur carrier protein which probably makes part of a sulfur-relay system. The sequence is that of Sulfur carrier protein TusA from Histophilus somni (strain 129Pt) (Haemophilus somnus).